A 103-amino-acid chain; its full sequence is Small ribosomal subunit protein bS6c (103 aa).

The protein belongs to the bacterial ribosomal protein bS6 family.

Its subcellular location is the plastid. The protein resides in the chloroplast. In terms of biological role, binds together with bS18 to 16S ribosomal RNA. This chain is Small ribosomal subunit protein bS6c, found in Gracilaria tenuistipitata var. liui (Red alga).